A 1000-amino-acid chain; its full sequence is Isoleucine--tRNA ligase, mitochondrial (1000 aa).

Residues 1-27 (MLGAWRAAPRLRLRARFGVASVWARSA) constitute a mitochondrion transit peptide. The 'HIGH' region motif lies at 102–112 (PYANGDPHVGH). ATP-binding residues include Lys649 and Lys652. The 'KMSKS' region motif lies at 649 to 653 (KMSKS).

It belongs to the class-I aminoacyl-tRNA synthetase family.

It is found in the mitochondrion matrix. The catalysed reaction is tRNA(Ile) + L-isoleucine + ATP = L-isoleucyl-tRNA(Ile) + AMP + diphosphate. Functionally, aminoacyl-tRNA synthetase that catalyzes the specific attachment of isoleucine to its cognate tRNA (tRNA(Ile)). The protein is Isoleucine--tRNA ligase, mitochondrial (IARS2) of Gallus gallus (Chicken).